The sequence spans 183 residues: uncharacterized protein (183 aa).

Positions 1 to 182 (MIKVVKGDIT…KALKIVGQGG (182 aa)) constitute a Macro domain.

This is an uncharacterized protein from Pyrococcus furiosus (strain ATCC 43587 / DSM 3638 / JCM 8422 / Vc1).